The chain runs to 310 residues: tRNA-cytidine(32) 2-sulfurtransferase (310 aa).

The PP-loop motif signature appears at 48 to 53; sequence SGGKDS. Positions 123, 126, and 214 each coordinate [4Fe-4S] cluster.

The protein belongs to the TtcA family. As to quaternary structure, homodimer. The cofactor is Mg(2+). [4Fe-4S] cluster is required as a cofactor.

It is found in the cytoplasm. It catalyses the reaction cytidine(32) in tRNA + S-sulfanyl-L-cysteinyl-[cysteine desulfurase] + AH2 + ATP = 2-thiocytidine(32) in tRNA + L-cysteinyl-[cysteine desulfurase] + A + AMP + diphosphate + H(+). It functions in the pathway tRNA modification. Functionally, catalyzes the ATP-dependent 2-thiolation of cytidine in position 32 of tRNA, to form 2-thiocytidine (s(2)C32). The sulfur atoms are provided by the cysteine/cysteine desulfurase (IscS) system. The chain is tRNA-cytidine(32) 2-sulfurtransferase from Vibrio vulnificus (strain YJ016).